The chain runs to 27 residues: GAVGEIQILLNNIASQLNGDQKKADKV.

Belongs to the TMP family.

It is found in the trichocyst. Its function is as follows. Structural protein that crystallize inside the trichocyst matrix. The chain is Trichocyst matrix protein T4-C (T4C) from Paramecium tetraurelia.